A 196-amino-acid polypeptide reads, in one-letter code: Protein TEX261 (196 aa).

A run of 5 helical transmembrane segments spans residues 3–23 (FMYV…TLAV), 42–62 (SRII…LYVF), 70–90 (IGVG…FPFI), 97–117 (FILS…FFAE), and 125–145 (VLAY…VSLS).

This sequence belongs to the SVP26 family. Detected in testis.

It is found in the membrane. This chain is Protein TEX261 (Tex261), found in Mus musculus (Mouse).